The chain runs to 381 residues: Arrestin-C (381 aa).

The protein belongs to the arrestin family. As to quaternary structure, homodimer; disulfide-linked in response to retinal illumination. Interacts with CXCR4; the interaction is dependent on the C-terminal phosphorylation of CXCR4 and modulates the calcium ion mobilization activity of CXCR4. Interacts with GPR84. In terms of tissue distribution, inner and outer segments, and the inner plexiform regions of the retina.

It is found in the photoreceptor inner segment. Its subcellular location is the cell projection. The protein resides in the cilium. It localises to the photoreceptor outer segment. Functionally, may play a role in an as yet undefined retina-specific signal transduction. Could bind to photoactivated-phosphorylated red/green opsins. In Mus musculus (Mouse), this protein is Arrestin-C (Arr3).